A 663-amino-acid chain; its full sequence is Dual specificity protein phosphatase 8 (663 aa).

The Rhodanese domain maps to 23–138; it reads GPGGPLVIDS…FSSCFPGLCE (116 aa). Positions 160–302 constitute a Tyrosine-protein phosphatase domain; it reads GLTRILPHLY…LLEYERSLKL (143 aa). The active-site Phosphocysteine intermediate is C246. Disordered regions lie at residues 313 to 367 and 404 to 624; these read LGTP…STAP and YAPS…FKRR. Low complexity-rich tracts occupy residues 334-353, 427-448, and 546-557; these read STSE…REGS, LDSP…PDSV, and SAGAPGPGNSSS. Residues 558–577 are compositionally biased toward gly residues; it reads SGGGGGGGGGGGGGGGGGGS. Residues 578-600 are compositionally biased toward low complexity; it reads SSSNSSSSSSSSSSSSSSSSSSS.

This sequence belongs to the protein-tyrosine phosphatase family. Non-receptor class dual specificity subfamily. Monomer. In terms of tissue distribution, expressed predominantly in brain and lung.

It is found in the cytoplasm. Its subcellular location is the nucleus. It carries out the reaction O-phospho-L-tyrosyl-[protein] + H2O = L-tyrosyl-[protein] + phosphate. It catalyses the reaction O-phospho-L-seryl-[protein] + H2O = L-seryl-[protein] + phosphate. The catalysed reaction is O-phospho-L-threonyl-[protein] + H2O = L-threonyl-[protein] + phosphate. Its function is as follows. Has phosphatase activity with synthetic phosphatase substrates and negatively regulates mitogen-activated protein kinase activity, presumably by catalysing their dephosphorylation. Expected to display protein phosphatase activity toward phosphotyrosine, phosphoserine and phosphothreonine residues. The polypeptide is Dual specificity protein phosphatase 8 (Dusp8) (Mus musculus (Mouse)).